Reading from the N-terminus, the 223-residue chain is Peptidyl-prolyl cis-trans isomerase, mitochondrial (223 aa).

The N-terminal 44 residues, 1–44 (MFGPRHFSVLKTTGSLVSSTFSSSLKPTATFSCARAFSQTSSIM), are a transit peptide targeting the mitochondrion. The region spanning 62–222 (NKPTSEIKAQ…KKPTIVDCGA (161 aa)) is the PPIase cyclophilin-type domain.

The protein belongs to the cyclophilin-type PPIase family.

The protein localises to the mitochondrion. Its subcellular location is the cytoplasm. The enzyme catalyses [protein]-peptidylproline (omega=180) = [protein]-peptidylproline (omega=0). With respect to regulation, binds cyclosporin A (CsA). CsA mediates some of its effects via an inhibitory action on PPIase. Its function is as follows. PPIases accelerate the folding of proteins. It catalyzes the cis-trans isomerization of proline imidic peptide bonds in oligopeptides. The polypeptide is Peptidyl-prolyl cis-trans isomerase, mitochondrial (csr-1) (Neurospora crassa (strain ATCC 24698 / 74-OR23-1A / CBS 708.71 / DSM 1257 / FGSC 987)).